We begin with the raw amino-acid sequence, 668 residues long: Protein ENTREP3 (668 aa).

The next 3 membrane-spanning stretches (helical) occupy residues 34–54, 67–87, and 91–111; these read LLTLGLVQVLLGILVVTFSMV, SCPSWAGFSLAFSGVVGIVSW, and FTLVISFFSLLSVLCVMLSMA. Asparagine 160 carries an N-linked (GlcNAc...) asparagine glycan. A helical membrane pass occupies residues 174–194; the sequence is LFSVCGLTICAAIICTLSAIV. A phosphoserine mark is found at serine 358 and serine 389. 3 disordered regions span residues 386–419, 442–503, and 550–570; these read FEESPLPRRPPRAARSYSCSAPEAPPPLGAPTAA, RVPR…SSDT, and SAEKRRPVPTFQKVPLPSGPA. Low complexity predominate over residues 398–407; it reads AARSYSCSAP. Serine 493 is modified (phosphoserine). Serine 574 bears the Phosphoserine mark. Disordered stretches follow at residues 597 to 620 and 645 to 668; these read KAPDPSGTGAHGHKQVPRSLWGRP and GRRLERGTRPHSLSLNGGSRETGL. Residues 655 to 668 are compositionally biased toward polar residues; that stretch reads HSLSLNGGSRETGL.

This sequence belongs to the ENTREP family. As to quaternary structure, may interact with WWOX. In terms of tissue distribution, widely expressed.

The protein resides in the membrane. The polypeptide is Protein ENTREP3 (Homo sapiens (Human)).